Reading from the N-terminus, the 182-residue chain is Dual-action ribosomal maturation protein DarP (182 aa).

It belongs to the DarP family.

It is found in the cytoplasm. Functionally, member of a network of 50S ribosomal subunit biogenesis factors which assembles along the 30S-50S interface, preventing incorrect 23S rRNA structures from forming. Promotes peptidyl transferase center (PTC) maturation. The polypeptide is Dual-action ribosomal maturation protein DarP (Serratia proteamaculans (strain 568)).